An 805-amino-acid chain; its full sequence is MATERLTRVHSLKERLDETLTANRNEILALLSRLEAKGKGILQHHQVIAEFEEIPEESRQKLTDGAFGEVLRSTQEAIVLPPWVALAVRPRPGIWEYLRVNVHALVVENLQPAEFLKFKEELVDGSANGNFVLELDFEPFTASFPRPTLNKSIGNGVHFLNRHLSAKLFHDKESLHPLLEFLRLHSYKGKTLMLNDRIQNPDSLQHVLRKAEEYLSTIDPETPYSEFEHRFQEIGLERGWGDTAERVLESIQLLLDLLEAPDPCTLESFLDRIPMVFNVVILSPHGYFAQDDVLGYPDTGGQVVYILDQVRALESEMLSRIKKQGLDIIPRILIITRLLPDAVGTTCGQRLEKVYGTEHCHILRVPFRDEKGIVRKWISRFEVWPYLETYTEDVAHELAKELQSKPDLIVGNYSDGNIVASLLAHKLGVTQCTIAHALEKTKYPESDIYWKKFEEKYHFSCQFTADLFAMNHTDFIITSTFQEIAGSKDKVGQYESHTAFTLPGLYRVVHGIDVFDPKFNIVSPGADQTIYFPYTETSRRLTSFYPEIEELLYSSVENEEHICVLKDRNKPIIFTMARLDRVKNITGLVEWYGKNAKLRELVNLVVVAGDRRKESKDLEEIAEMKKMYGLIETYKLNGQFRWISSQMNRVRNGELYRVICDTKGAFVQPAVYEAFGLTVVEAMATGLPTFATLNGGPAEIIVHGKSGFHIDPYHGDRAADLLVEFFEKVKADPSHWDKISQGGLQRIEEKYTWTIYSQRLLTLTGVYGFWKHVSNLDRLESRRYLEMFYALKYRKLAESVPLAVE.

Residues 275–752 (MVFNVVILSP…GLQRIEEKYT (478 aa)) form a GT-B glycosyltransferase region.

It belongs to the glycosyltransferase 1 family. Plant sucrose synthase subfamily.

It catalyses the reaction an NDP-alpha-D-glucose + D-fructose = a ribonucleoside 5'-diphosphate + sucrose + H(+). Its function is as follows. Sucrose-cleaving enzyme that provides UDP-glucose and fructose for various metabolic pathways. In Medicago sativa (Alfalfa), this protein is Sucrose synthase.